Reading from the N-terminus, the 206-residue chain is MARYLGPKLKLSRREGTDLFLKSGVRAIDTKCKIEQAPGQHGARKPRLSDYGVQLREKQKVRRTYGVLERQFRNYYKEAARLKGNTGENLLALLEGRLDNVVYRMGFGATRAESRQLVSHKAIMVNGRVVNIASYQVKANDVVCIREKAKKQSRVKAALELAEQREKPTWLEVDASKMEGTFKRQPERSDLSADINEHLIVELYSK.

An S4 RNA-binding domain is found at 96–156; that stretch reads GRLDNVVYRM…EKAKKQSRVK (61 aa).

Belongs to the universal ribosomal protein uS4 family. Part of the 30S ribosomal subunit. Contacts protein S5. The interaction surface between S4 and S5 is involved in control of translational fidelity.

In terms of biological role, one of the primary rRNA binding proteins, it binds directly to 16S rRNA where it nucleates assembly of the body of the 30S subunit. With S5 and S12 plays an important role in translational accuracy. The chain is Small ribosomal subunit protein uS4 from Enterobacter sp. (strain 638).